Consider the following 402-residue polypeptide: Nicotinate phosphoribosyltransferase (402 aa).

Histidine 221 is subject to Phosphohistidine; by autocatalysis.

The protein belongs to the NAPRTase family. Transiently phosphorylated on a His residue during the reaction cycle. Phosphorylation strongly increases the affinity for substrates and increases the rate of nicotinate D-ribonucleotide production. Dephosphorylation regenerates the low-affinity form of the enzyme, leading to product release.

The enzyme catalyses nicotinate + 5-phospho-alpha-D-ribose 1-diphosphate + ATP + H2O = nicotinate beta-D-ribonucleotide + ADP + phosphate + diphosphate. It participates in cofactor biosynthesis; NAD(+) biosynthesis; nicotinate D-ribonucleotide from nicotinate: step 1/1. Functionally, catalyzes the synthesis of beta-nicotinate D-ribonucleotide from nicotinate and 5-phospho-D-ribose 1-phosphate at the expense of ATP. The polypeptide is Nicotinate phosphoribosyltransferase (Sodalis glossinidius (strain morsitans)).